The primary structure comprises 397 residues: Tryptophan synthase beta chain (397 aa).

The residue at position 87 (K87) is an N6-(pyridoxal phosphate)lysine.

This sequence belongs to the TrpB family. Tetramer of two alpha and two beta chains. Pyridoxal 5'-phosphate serves as cofactor.

It carries out the reaction (1S,2R)-1-C-(indol-3-yl)glycerol 3-phosphate + L-serine = D-glyceraldehyde 3-phosphate + L-tryptophan + H2O. Its pathway is amino-acid biosynthesis; L-tryptophan biosynthesis; L-tryptophan from chorismate: step 5/5. Functionally, the beta subunit is responsible for the synthesis of L-tryptophan from indole and L-serine. The polypeptide is Tryptophan synthase beta chain (Shigella boydii serotype 18 (strain CDC 3083-94 / BS512)).